We begin with the raw amino-acid sequence, 807 residues long: MAAKLTRLHSLRERLGATFSSHPNELIALFSRYVHQGKGMLQRHQLLAEFDALFESDKEKYAPFEDILRAAQEAIVLPPWVALAIRPRTGVWDYIRVNVSELAVEELTVSEYLAFKEQLVDEHASRKFVLELDFEPFNASFPRPSMSKSYGKGVQFLNRHLSSKLFQDKESLYPLLNFLKAHNYKGTTMILNDRIQSLRGLQSALRKAEEYLVSIPEDTPSSEFNHRFQELGLEKGWGDTAKRVHDTIHLLLDLLEAPDPASLEKFLGTIPMMFNVVILSPHGYFAQSNVLGYPDTGGQVVYILDQVRALENEMLLRIKQQGLDITPKILIVTRLLPDAVGTTCGQRLEKVIGTEHTDILRVPFRTENGIRKWISRFDVWPYLETYTEDVANELMREMQTKPDLIIGNYSDGNLVATLLAHKLGVTQCTIAHALEKTKYPNSDIYLDKFDSQYHFSCQFTADLIAMNHTDFIITSTFQEIAGSKDSVGQYESHIAFTLPDLYRVVHGIDVFDPKFNIVSPGADMTVYFPYTETDKRLTAFHSEIEELLYSDVENDEHKFVLKDRNKPIIFSMARLDRVKNMTGLVEMYGKNAHLKDLANLVIVAGDHGKESKDREEQAEFKRMYSLIEEYKLKGHIRWISAQMNRVRNGELYRYICDTKGAFVQPAFYEAFGLTVIEAMTCGLPTIATCHGGPAEIIVDGVSGLHIDPYHSDKAADILVNFFEKSTADPSYWDKISQGGLKRIYEKYTWKLYSERLMTLTGVYGFWKYVSNLERRETRRYLEMFYALKYRSLAAAVPLAVDGESSGN.

Residues 272–748 (MMFNVVILSP…GLKRIYEKYT (477 aa)) form a GT-B glycosyltransferase region.

This sequence belongs to the glycosyltransferase 1 family. Plant sucrose synthase subfamily. Forms homotetramers. In endosperm it forms both homotetramers and heterotetramers with SS2, all three possible heterotetramers are formed. In terms of tissue distribution, highly expressed in developing endosperm and in roots and, at lower levels, in coleoptiles and aleurone. In 3 day old roots it is detected in cap cells and along the vascular strand, starting just after the meristemic region. In 9 day old leaves it is found in the phloem. In seeds it is distributed throughout the endosperm and also found in the assimilate-unloading tissues, the nucellar projection, the vascular area and at a high concentration in the chalazal region.

The catalysed reaction is an NDP-alpha-D-glucose + D-fructose = a ribonucleoside 5'-diphosphate + sucrose + H(+). In terms of biological role, sucrose-cleaving enzyme that provides UDP-glucose and fructose for various metabolic pathways. The sequence is that of Sucrose synthase 1 (SS1) from Hordeum vulgare (Barley).